Reading from the N-terminus, the 595-residue chain is Grainyhead-like protein 3 homolog (595 aa).

Residues 29–92 (DAWSKYLENP…CDQVKRSCSE (64 aa)) are transcription activation. The region spanning 221–454 (ANRDFEYTLE…DMETHPVLFI (234 aa)) is the Grh/CP2 DB domain. Residues 484–505 (SSQSFPKGLEAPPSKQQTSEDS) are disordered.

It belongs to the grh/CP2 family. Grainyhead subfamily.

It is found in the nucleus. Transcription factor playing important roles in primary neurulation and in the differentiation of stratified epithelia of both ectodermal and endodermal origin. Binds directly to the consensus DNA sequence 5'-AACCGGTT-3' acting as an activator and repressor on distinct target genes. The chain is Grainyhead-like protein 3 homolog (grhl3) from Xenopus laevis (African clawed frog).